We begin with the raw amino-acid sequence, 281 residues long: uncharacterized protein (281 aa).

Transmembrane regions (helical) follow at residues 30–50 (AIVA…FIVI), 54–74 (VFIS…GYYF), 76–96 (FNPL…MGWV), 106–126 (TLIG…IDLT), 153–173 (AGLD…FLAI), 198–218 (IALT…IALL), 235–255 (MMAV…ALSY), and 259–279 (LSSG…SLAF).

The protein belongs to the ABC-3 integral membrane protein family.

The protein localises to the cell membrane. This is an uncharacterized protein from Synechocystis sp. (strain ATCC 27184 / PCC 6803 / Kazusa).